A 162-amino-acid chain; its full sequence is NADH-quinone oxidoreductase subunit I (162 aa).

4Fe-4S ferredoxin-type domains follow at residues 53 to 83 (LRRY…IEAE) and 93 to 122 (TRYD…EGPN). Residues Cys63, Cys66, Cys69, Cys73, Cys102, Cys105, Cys108, and Cys112 each coordinate [4Fe-4S] cluster.

It belongs to the complex I 23 kDa subunit family. As to quaternary structure, NDH-1 is composed of 14 different subunits. Subunits NuoA, H, J, K, L, M, N constitute the membrane sector of the complex. [4Fe-4S] cluster is required as a cofactor.

The protein resides in the cell inner membrane. The catalysed reaction is a quinone + NADH + 5 H(+)(in) = a quinol + NAD(+) + 4 H(+)(out). In terms of biological role, NDH-1 shuttles electrons from NADH, via FMN and iron-sulfur (Fe-S) centers, to quinones in the respiratory chain. The immediate electron acceptor for the enzyme in this species is believed to be ubiquinone. Couples the redox reaction to proton translocation (for every two electrons transferred, four hydrogen ions are translocated across the cytoplasmic membrane), and thus conserves the redox energy in a proton gradient. The polypeptide is NADH-quinone oxidoreductase subunit I (Rhodospirillum centenum (strain ATCC 51521 / SW)).